The sequence spans 183 residues: Ribosome rescue factor SmrB (183 aa).

Residues 98–173 enclose the Smr domain; it reads LDLHGLTQMQ…GDAALLVLIE (76 aa).

This sequence belongs to the SmrB family. In terms of assembly, associates with collided ribosomes, but not with correctly translating polysomes.

Functionally, acts as a ribosome collision sensor. Detects stalled/collided disomes (pairs of ribosomes where the leading ribosome is stalled and a second ribosome has collided with it) and endonucleolytically cleaves mRNA at the 5' boundary of the stalled ribosome. Stalled/collided disomes form a new interface (primarily via the 30S subunits) that binds SmrB. Cleaved mRNA becomes available for tmRNA ligation, leading to ribosomal subunit dissociation and rescue of stalled ribosomes. This Enterobacter sp. (strain 638) protein is Ribosome rescue factor SmrB.